Consider the following 238-residue polypeptide: Riboflavin synthase (238 aa).

Lumazine-binding repeat units follow at residues 1–103 (MFTG…FGGH) and 104–205 (YVQG…EKQI). Residues 4–6 (GIV), 54–56 (CLT), and 68–73 (GISPET) contribute to the 2,4-dihydroxypteridine site. Ser95 is modified (phosphoserine). 2,4-dihydroxypteridine-binding positions include 107-109 (GHV), Lys143, 152-154 (SLT), and 170-175 (SMIKHT).

Homotrimer.

The catalysed reaction is 2 6,7-dimethyl-8-(1-D-ribityl)lumazine + H(+) = 5-amino-6-(D-ribitylamino)uracil + riboflavin. It functions in the pathway cofactor biosynthesis; riboflavin biosynthesis; riboflavin from 2-hydroxy-3-oxobutyl phosphate and 5-amino-6-(D-ribitylamino)uracil: step 2/2. Its function is as follows. Catalyzes the dismutation of two molecules of 6,7-dimethyl-8-ribityllumazine, resulting in the formation of riboflavin and 5-amino-6-(D-ribitylamino)uracil. The chain is Riboflavin synthase from Saccharomyces cerevisiae (strain ATCC 204508 / S288c) (Baker's yeast).